The following is a 967-amino-acid chain: Leucine-rich repeat receptor-like protein kinase PXC2 (967 aa).

The signal sequence occupies residues 1–20; sequence MFNGAVSLLFLFLAVVSARA. The Extracellular portion of the chain corresponds to 21–609; the sequence is DPTFNDDVLG…QIRKSVLSIS (589 aa). LRR repeat units lie at residues 91–114, 115–139, 141–164, 165–189, 191–212, 214–236, 237–260, 262–284, 285–307, 308–332, and 334–356; these read LQFL…EFPH, LGSL…FFEQ, GSLR…LSYC, STLT…WFLK, LKSL…LGGL, DLRH…IGRC, SSLK…MKSL, SCSS…IGDI, ATLE…SLGN, LEFL…LSNC, and NLIS…MFTG. Asparagine 103 and asparagine 127 each carry an N-linked (GlcNAc...) asparagine glycan. An N-linked (GlcNAc...) asparagine glycan is attached at asparagine 171. Asparagine 219 carries N-linked (GlcNAc...) asparagine glycosylation. Asparagine 296, asparagine 315, and asparagine 331 each carry an N-linked (GlcNAc...) asparagine glycan. Asparagine 374 is a glycosylation site (N-linked (GlcNAc...) asparagine). LRR repeat units follow at residues 384 to 408, 410 to 432, 433 to 456, 457 to 480, 482 to 503, 504 to 528, and 530 to 552; these read LQGL…IWIL, SLLQ…IGGL, KVAE…IGGA, VSLK…ISNC, ALNT…SIGS, LSNL…IEKL, and HLLT…GFFN. Asparagine 415, asparagine 446, asparagine 479, asparagine 487, asparagine 516, asparagine 535, asparagine 540, asparagine 571, and asparagine 587 each carry an N-linked (GlcNAc...) asparagine glycan. Residues 610–630 traverse the membrane as a helical segment; the sequence is ALIAIGAAAVIAIGVVAVTLL. At 631–967 the chain is on the cytoplasmic side; it reads NVHARSSVSR…LIQCPSHDLE (337 aa). The region spanning 687–959 is the Protein kinase domain; it reads LNKDSELGRG…EEVVKILELI (273 aa). ATP contacts are provided by residues 693–701 and lysine 715; that span reads LGRGGFGVV.

The protein belongs to the protein kinase superfamily. Ser/Thr protein kinase family. In terms of tissue distribution, expressed in the vascular strands of cotyledons, the shoot apex, hypocotyls, roots, leaves, stems and flowers.

It is found in the cell membrane. In terms of biological role, leucine-rich repeat receptor-like protein kinase that may play a role in vascular tissues development. The chain is Leucine-rich repeat receptor-like protein kinase PXC2 from Arabidopsis thaliana (Mouse-ear cress).